The primary structure comprises 1396 residues: G2/mitotic-specific cyclin-B3 (1396 aa).

Disordered stretches follow at residues 1–64 (MPPP…TNAS), 259–398 (KEKP…PQME), and 477–500 (TTEK…PGEL). Residues 10–34 (SKLETEKAQSNKITPREEQQSEKIG) are compositionally biased toward basic and acidic residues. The short motif at 54 to 62 (RSVFEDVTN) is the D-box element. Basic residues predominate over residues 264–273 (VKKPHFRKKK). Polar residues predominate over residues 306–315 (LQENTNNKDA). A Phosphoserine modification is found at Ser-703. Residues 775-796 (VDEPLSHQSPHIQNHSDTTKEA) form a disordered region. The span at 780-790 (SHQSPHIQNHS) shows a compositional bias: polar residues.

This sequence belongs to the cyclin family. Cyclin AB subfamily. In terms of assembly, interacts with CDK2 kinase. In terms of processing, ubiquitinated. Ubiquitination leads to its degradation during anaphase entry, after degradation of CCNB1. In terms of tissue distribution, expressed in testis. Also expressed in the fetal ovary, but not in the adult.

Its subcellular location is the nucleus. Its function is as follows. Cyclins are positive regulatory subunits of the cyclin-dependent kinases (CDKs), and thereby play an essential role in the control of the cell cycle, notably via their destruction during cell division. Its tissue specificity suggest that it may be required during early meiotic prophase I. In Mus musculus (Mouse), this protein is G2/mitotic-specific cyclin-B3 (Ccnb3).